The sequence spans 101 residues: Small integral membrane protein 21 (101 aa).

Residues 49-65 traverse the membrane as a helical segment; that stretch reads HIRFFTLLVLFHVMVLL.

It is found in the membrane. In Homo sapiens (Human), this protein is Small integral membrane protein 21 (SMIM21).